The sequence spans 250 residues: Membrane-spanning 4-domains subfamily A member 8 (250 aa).

Over 1–74 the chain is Cytoplasmic; that stretch reads MNSMTSAVPV…ALKEGKTLGA (74 aa). A helical transmembrane segment spans residues 75-95; sequence IQIIIGLAHIGLGSIMATVLV. Residues 96–98 lie on the Extracellular side of the membrane; it reads GEY. A helical transmembrane segment spans residues 99-119; that stretch reads LSISFYGGFPFWGGLWFIISG. The Cytoplasmic portion of the chain corresponds to 120 to 136; it reads SLSVAAENQPYSYCLLS. Residues 137–157 traverse the membrane as a helical segment; the sequence is GSLGLNIVSAICSAVGVILFI. Over 158-180 the chain is Extracellular; that stretch reads TDLSIPHPYAYPDYYPYAWGVNP. A helical transmembrane segment spans residues 181 to 201; the sequence is GMAISGVLLVFCLLEFGIACA. Topologically, residues 202-250 are cytoplasmic; sequence SSHFGCQLVCCQSSNVSVIYPNIYAANPVITPEPVTSPPSYSSEIQANK.

It belongs to the MS4A family. Expressed by hematopoietic tissues and cells lines.

It is found in the membrane. Functionally, may be involved in signal transduction as a component of a multimeric receptor complex. The polypeptide is Membrane-spanning 4-domains subfamily A member 8 (MS4A8) (Homo sapiens (Human)).